Reading from the N-terminus, the 841-residue chain is Axin-1 (841 aa).

The interval 1–78 (MNIQGKGFPL…GYEPEGSASP (78 aa)) is disordered. The segment covering 44-61 (FYSSKSDAVRNETSTATP) has biased composition (polar residues). In terms of domain architecture, RGS spans 88-211 (SLHSLLDDQD…LKSDIYLEYT (124 aa)). Residues 217-269 (SPKIYSDPSSGSGTGKGLPGYLPTLNEDEEWKCDQDTEPEASRDSAPSSRLTQ) form a disordered region. Residues 248-259 (KCDQDTEPEASR) show a composition bias toward basic and acidic residues. Residues 348-433 (LRKQHRREMQ…DADISSGPSV (86 aa)) form an interaction with GSK3B region. The segment at 434-508 (ISHKMPSAQP…RSPESGHLGK (75 aa)) is interaction with beta-catenin. 3 disordered regions span residues 482–527 (KTPG…TTKS), 613–635 (NIKK…SPED), and 727–756 (RRLE…SGAS). The segment covering 727–736 (RRLEEEEKRA) has biased composition (basic and acidic residues). Residues 759–841 (CENIVVAYYF…KIIGKVEKID (83 aa)) form the DIX domain.

Homodimer. In terms of processing, ADP-ribosylated by tankyrase TNKS and TNKS2. Poly-ADP-ribosylated protein is recognized by RNF146, followed by ubiquitination at 'Lys-48' and subsequent activation of the Wnt signaling pathway. Ubiquitinated by RNF146 when poly-ADP-ribosylated, leading to its degradation and subsequent activation of the Wnt signaling pathway.

It is found in the cytoplasm. Its subcellular location is the nucleus. The protein localises to the membrane. It localises to the cell membrane. Its function is as follows. Component of the beta-catenin destruction complex required for regulating CTNNB1 levels through phosphorylation and ubiquitination, and modulating Wnt-signaling. Controls dorsoventral patterning via two opposing effects; down-regulates CTNNB1 to inhibit the Wnt signaling pathway and ventralize embryos, but also dorsalizes embryos by activating a Wnt-independent JNK signaling pathway. The chain is Axin-1 (AXIN1) from Gallus gallus (Chicken).